Here is a 141-residue protein sequence, read N- to C-terminus: D-aminoacyl-tRNA deacylase (141 aa).

Positions 133–134 (GP) match the Gly-cisPro motif, important for rejection of L-amino acids motif.

Belongs to the DTD family. In terms of assembly, homodimer.

It is found in the cytoplasm. It carries out the reaction glycyl-tRNA(Ala) + H2O = tRNA(Ala) + glycine + H(+). It catalyses the reaction a D-aminoacyl-tRNA + H2O = a tRNA + a D-alpha-amino acid + H(+). In terms of biological role, an aminoacyl-tRNA editing enzyme that deacylates mischarged D-aminoacyl-tRNAs. Also deacylates mischarged glycyl-tRNA(Ala), protecting cells against glycine mischarging by AlaRS. Acts via tRNA-based rather than protein-based catalysis; rejects L-amino acids rather than detecting D-amino acids in the active site. By recycling D-aminoacyl-tRNA to D-amino acids and free tRNA molecules, this enzyme counteracts the toxicity associated with the formation of D-aminoacyl-tRNA entities in vivo and helps enforce protein L-homochirality. This Beutenbergia cavernae (strain ATCC BAA-8 / DSM 12333 / CCUG 43141 / JCM 11478 / NBRC 16432 / NCIMB 13614 / HKI 0122) protein is D-aminoacyl-tRNA deacylase.